Here is a 1312-residue protein sequence, read N- to C-terminus: MSRIEKMSILGVRSFGIEDKDKQIITFFSPLTILVGPNGAGKTTIIECLKYICTGDFPPGTKGNTFVHDPKVAQETDVRAQIRLQFRDVNGELIAVQRSMVCTQKSKKTEFKTLEGVITRTKHGEKVSLSSKCAEIDREMISSLGVSKAVLNNVIFCHQEDSNWPLSEGKALKQKFDEIFSATRYIKALETLRQVRQTQGQKVKEYQMELKYLKQYKEKACEIRDQITSKEAQLTSSKEIVKSYENELDPLKNRLKEIEHNLSKIMKLDNEIKALDSRKKQMEKDNSELEEKMEKVFQGTDEQLNDLYHNHQRTVREKERKLVDCHRELEKLNKESRLLNQEKSELLVEQGRLQLQADRHQEHIRARDSLIQSLATQLELDGFERGPFSERQIKNFHKLVRERQEGEAKTANQLMNDFAEKETLKQKQIDEIRDKKTGLGRIIELKSEILSKKQNELKNVKYELQQLEGSSDRILELDQELIKAERELSKAEKNSNVETLKMEVISLQNEKADLDRTLRKLDQEMEQLNHHTTTRTQMEMLTKDKADKDEQIRKIKSRHSDELTSLLGYFPNKKQLEDWLHSKSKEINQTRDRLAKLNKELASSEQNKNHINNELKRKEEQLSSYEDKLFDVCGSQDFESDLDRLKEEIEKSSKQRAMLAGATAVYSQFITQLTDENQSCCPVCQRVFQTEAELQEVISDLQSKLRLAPDKLKSTESELKKKEKRRDEMLGLVPMRQSIIDLKEKEIPELRNKLQNVNRDIQRLKNDIEEQETLLGTIMPEEESAKVCLTDVTIMERFQMELKDVERKIAQQAAKLQGIDLDRTVQQVNQEKQEKQHKLDTVSSKIELNRKLIQDQQEQIQHLKSTTNELKSEKLQISTNLQRRQQLEEQTVELSTEVQSLYREIKDAKEQVSPLETTLEKFQQEKEELINKKNTSNKIAQDKLNDIKEKVKNIHGYMKDIENYIQDGKDDYKKQKETELNKVIAQLSECEKHKEKINEDMRLMRQDIDTQKIQERWLQDNLTLRKRNEELKEVEEERKQHLKEMGQMQVLQMKSEHQKLEENIDNIKRNHNLALGRQKGYEEEIIHFKKELREPQFRDAEEKYREMMIVMRTTELVNKDLDIYYKTLDQAIMKFHSMKMEEINKIIRDLWRSTYRGQDIEYIEIRSDADENVSASDKRRNYNYRVVMLKGDTALDMRGRCSAGQKVLASLIIRLALAETFCLNCGIIALDEPTTNLDRENIESLAHALVEIIKSRSQQRNFQLLVITHDEDFVELLGRSEYVEKFYRIKKNIDQCSEIVKCSVSSLGFNVH.

ATP-binding residues include Arg-13, Asn-38, Gly-39, Gly-41, Lys-42, Thr-43, Thr-44, Val-67, Asp-69, and Gln-159. Thr-43 lines the Mg(2+) pocket. Gln-159 serves as a coordination point for Mg(2+). 3 coiled-coil regions span residues 228-359, 401-598, and 635-673; these read TSKE…QADR, RERQ…AKLN, and SQDF…ITQL. At Ser-635 the chain carries Phosphoserine; by ATM. One can recognise a Zinc-hook domain in the interval 635–734; the sequence is SQDFESDLDR…RRDEMLGLVP (100 aa). Zn(2+)-binding residues include Cys-681 and Cys-684. Position 690 is a phosphothreonine (Thr-690). 2 coiled-coil regions span residues 706–734 and 789–1079; these read RLAP…GLVP and LTDV…GRQK. Lys-959 bears the N6-acetyllysine mark.

This sequence belongs to the SMC family. RAD50 subfamily. In terms of assembly, component of the MRN complex composed of two heterodimers RAD50 and MRE11 associated with a single NBN. The MRN complexes dimerize on DNA to form joined MRN-MRN oligomers required for DNA double-strand break repair. As part of the MRN complex, interacts with MCM8 and MCM9; the interaction recruits the complex to DNA repair sites. Component of the BASC complex, at least composed of BRCA1, MSH2, MSH6, MLH1, ATM, BLM, RAD50, MRE11 and NBN. Found in a complex with TERF2. Interacts with RINT1. Interacts with BRCA1 via its N-terminal domain. Interacts with DCLRE1C/Artemis. Interacts with MRNIP. Interacts with CYREN (via XLF motif). Interacts with C1QBP and MRE11; interaction takes place in absence of DNA damage to form the MRC (MRE11-RAD50-C1QBP) complex that inhibits the activity of MRE11. (Microbial infection) Interacts with herpes simplex virus 1 protein UL12. Zn(2+) serves as cofactor. In terms of processing, phosphorylation at Ser-635 by ATM in response to DNA damage is required for double-strand break (DSB) repair. As to expression, expressed at very low level in most tissues, except in testis where it is expressed at higher level. Expressed in fibroblasts.

It localises to the nucleus. Its subcellular location is the chromosome. The protein resides in the telomere. The enzyme catalyses ATP + H2O = ADP + phosphate + H(+). Its function is as follows. Component of the MRN complex, which plays a central role in double-strand break (DSB) repair, DNA recombination, maintenance of telomere integrity and meiosis. The MRN complex is involved in the repair of DNA double-strand breaks (DSBs) via homologous recombination (HR), an error-free mechanism which primarily occurs during S and G2 phases. The complex (1) mediates the end resection of damaged DNA, which generates proper single-stranded DNA, a key initial steps in HR, and is (2) required for the recruitment of other repair factors and efficient activation of ATM and ATR upon DNA damage. The MRN complex possesses single-strand endonuclease activity and double-strand-specific 3'-5' exonuclease activity, which are provided by MRE11, to initiate end resection, which is required for single-strand invasion and recombination. Within the complex, RAD50 is both required to bind DNA ends and hold them in close proximity and regulate the activity of MRE11. RAD50 provides an ATP-dependent control of MRE11 by positioning DNA ends into the MRE11 active site: ATP-binding induces a large structural change from an open form with accessible MRE11 nuclease sites into a closed form. The MRN complex is also required for DNA damage signaling via activation of the ATM and ATR kinases: the nuclease activity of MRE11 is not required to activate ATM and ATR. The MRN complex is also required for the processing of R-loops. In telomeres the MRN complex may modulate t-loop formation. This Homo sapiens (Human) protein is DNA repair protein RAD50.